We begin with the raw amino-acid sequence, 428 residues long: uncharacterized protein (428 aa).

The 111-residue stretch at 241–351 (KEEEEQSVGK…KLLGGCERVE (111 aa)) folds into the Glutaredoxin domain. Residues 386 to 401 (EDDDDDDDEGDDDESV) are compositionally biased toward acidic residues. Residues 386 to 405 (EDDDDDDDEGDDDESVKEER) form a disordered region.

This is an uncharacterized protein from Arabidopsis thaliana (Mouse-ear cress).